The sequence spans 627 residues: tRNA uridine 5-carboxymethylaminomethyl modification enzyme MnmG (627 aa).

Residues 13–18 (GGGHAG), V125, and S180 contribute to the FAD site. Residue 274-288 (GPRYCPSIEDKVVRF) participates in NAD(+) binding. Q371 is an FAD binding site.

It belongs to the MnmG family. In terms of assembly, homodimer. Heterotetramer of two MnmE and two MnmG subunits. Requires FAD as cofactor.

Its subcellular location is the cytoplasm. NAD-binding protein involved in the addition of a carboxymethylaminomethyl (cmnm) group at the wobble position (U34) of certain tRNAs, forming tRNA-cmnm(5)s(2)U34. This is tRNA uridine 5-carboxymethylaminomethyl modification enzyme MnmG from Francisella tularensis subsp. tularensis (strain FSC 198).